The chain runs to 524 residues: Glutamyl-tRNA(Gln) amidotransferase subunit A (524 aa).

Catalysis depends on charge relay system residues Lys109 and Ser184. Residue Ser208 is the Acyl-ester intermediate of the active site.

This sequence belongs to the amidase family. GatA subfamily. In terms of assembly, heterotrimer of A, B and C subunits.

It carries out the reaction L-glutamyl-tRNA(Gln) + L-glutamine + ATP + H2O = L-glutaminyl-tRNA(Gln) + L-glutamate + ADP + phosphate + H(+). In terms of biological role, allows the formation of correctly charged Gln-tRNA(Gln) through the transamidation of misacylated Glu-tRNA(Gln) in organisms which lack glutaminyl-tRNA synthetase. The reaction takes place in the presence of glutamine and ATP through an activated gamma-phospho-Glu-tRNA(Gln). This chain is Glutamyl-tRNA(Gln) amidotransferase subunit A, found in Tropheryma whipplei (strain Twist) (Whipple's bacillus).